Reading from the N-terminus, the 209-residue chain is Lipid A acyltransferase PagP (209 aa).

The N-terminal stretch at 1 to 24 is a signal peptide; that stretch reads MHLKRALITLSLITLPIIPFSSYA. Catalysis depends on residues His-81, Asp-124, and Ser-125.

The protein belongs to the lipid A palmitoyltransferase family. Homodimer.

The protein localises to the cell outer membrane. It carries out the reaction a lipid A + a 1,2-diacyl-sn-glycero-3-phosphocholine = a hepta-acyl lipid A + a 2-acyl-sn-glycero-3-phosphocholine. It catalyses the reaction a lipid IVA + a 1,2-diacyl-sn-glycero-3-phosphocholine = a lipid IVB + a 2-acyl-sn-glycero-3-phosphocholine. The catalysed reaction is a lipid IIA + a 1,2-diacyl-sn-glycero-3-phosphocholine = a lipid IIB + a 2-acyl-sn-glycero-3-phosphocholine. Its function is as follows. Transfers a fatty acid residue from the sn-1 position of a phospholipid to the N-linked hydroxyfatty acid chain on the proximal unit of lipid A or its precursors. This chain is Lipid A acyltransferase PagP, found in Pectobacterium parmentieri (strain WPP163) (Pectobacterium wasabiae (strain WPP163)).